Reading from the N-terminus, the 358-residue chain is Histidinol-phosphate aminotransferase (358 aa).

Lysine 218 carries the post-translational modification N6-(pyridoxal phosphate)lysine.

It belongs to the class-II pyridoxal-phosphate-dependent aminotransferase family. Histidinol-phosphate aminotransferase subfamily. Homodimer. It depends on pyridoxal 5'-phosphate as a cofactor.

The enzyme catalyses L-histidinol phosphate + 2-oxoglutarate = 3-(imidazol-4-yl)-2-oxopropyl phosphate + L-glutamate. The protein operates within amino-acid biosynthesis; L-histidine biosynthesis; L-histidine from 5-phospho-alpha-D-ribose 1-diphosphate: step 7/9. The protein is Histidinol-phosphate aminotransferase of Dehalococcoides mccartyi (strain ATCC BAA-2100 / JCM 16839 / KCTC 5957 / BAV1).